A 339-amino-acid chain; its full sequence is NmrA-like family domain-containing oxidoreductase cpsB (339 aa).

Residue lysine 142 coordinates NADP(+).

It belongs to the NmrA-type oxidoreductase family.

The enzyme catalyses didehydrocampesine A + 2 AH2 = campesine A + 2 A. It participates in alkaloid biosynthesis. Oxidoreductase; part of the gene cluster that mediates the biosynthesis of campesine G, a dimeric indole piperazine alkaloid that shows good insecticidal activity Galleria mellonella. Within the pathway, cpsB reduces the unstable (S,S)-trypyl-valyl dihydropiperazine (didehydrocampesine A) intermediate to (S, S)-trypyl-valyl-piperazine (campesine A) using two equivalents of NAD(P)H. The non-canonical non-ribosomal peptide synthetase cpsA catalyzes the first steps of the pathway by producing L-tryptophanal and L-valinal from their respective amino-acids. These products condensate spontaneously to form trypyl-valyl pyrazine also known as didehydrocampesine A. The NmrA-like family domain-containing oxidoreductase cpsB is the next enzyme in cps pathway and reduces the unstable didehydrocampesine A to campesine A. The methyltransferase cpsF and the acetyltransferase cpsE both recognize N13 of piperazine ring to carry out methylation and acetylation of campesine A to produce campesine C and B, respectively. The cytochrome P450 monooxygenase cpsD then acts as a dimerase that catalyzes oxidative heterocoupling between campesine B and C to produce heterodimers with unexpected 6/5/6/6/6/6/5/6 eight-ring scaffold called campesine D. Finally,the cytochrome P450 monooxygenase cpsC is a regioselective dehydrogenase that catalyzes dehydrogenation reaction towards C2-N1 to produce campesine G. This Aspergillus campestris (strain IBT 28561) protein is NmrA-like family domain-containing oxidoreductase cpsB.